The sequence spans 214 residues: Uridine kinase (214 aa).

Position 15 to 22 (15 to 22) interacts with ATP; that stretch reads GASASGKS.

The protein belongs to the uridine kinase family.

The protein resides in the cytoplasm. It carries out the reaction uridine + ATP = UMP + ADP + H(+). The enzyme catalyses cytidine + ATP = CMP + ADP + H(+). It participates in pyrimidine metabolism; CTP biosynthesis via salvage pathway; CTP from cytidine: step 1/3. The protein operates within pyrimidine metabolism; UMP biosynthesis via salvage pathway; UMP from uridine: step 1/1. The polypeptide is Uridine kinase (Tolumonas auensis (strain DSM 9187 / NBRC 110442 / TA 4)).